The chain runs to 385 residues: Cotranscriptional regulator ARB2A homolog (385 aa).

2 disordered regions span residues 1 to 65 (MSDI…NGEE) and 220 to 239 (EEQKEKAKEEEEKKDDNGKL). The segment covering 52–62 (NNNNNNSNNSN) has biased composition (low complexity). A compositionally biased stretch (basic and acidic residues) spans 220-238 (EEQKEKAKEEEEKKDDNGK).

Belongs to the ARB2A family.

In Dictyostelium discoideum (Social amoeba), this protein is Cotranscriptional regulator ARB2A homolog.